The sequence spans 178 residues: MACEQHEGCYELEEREEIEDIKDSDTKWVSITQAAKLHNVTRQAIYVAIKQKKLKASKETRWEIDIKDLEEYKRNRYSRKKSLYQGELVFDNGKGCYSINQVAQILGIPVQKVYYATRTGTIRGERKGAAWVIHVSEIERYKNEYLSKQAAKKLKGAEPKEHQAPNFEPPTEIFPESN.

The tract at residues 152 to 178 is disordered; it reads KKLKGAEPKEHQAPNFEPPTEIFPESN.

This sequence belongs to the EUO family.

This is an uncharacterized protein from Chlamydia pneumoniae (Chlamydophila pneumoniae).